A 382-amino-acid polypeptide reads, in one-letter code: 26S proteasome non-ATPase regulatory subunit 6 (382 aa).

The PCI domain maps to 186-354 (QFKEASDLYL…GVIETTRSDA (169 aa)).

Belongs to the proteasome subunit S10 family.

Its function is as follows. Acts as a regulatory subunit of the 26S proteasome which is involved in the ATP-dependent degradation of ubiquitinated proteins. The polypeptide is 26S proteasome non-ATPase regulatory subunit 6 (psmD6) (Dictyostelium discoideum (Social amoeba)).